A 506-amino-acid polypeptide reads, in one-letter code: MKEYRVYLERARSRQQDFLYPLIFREYIYGLAYSHNFNRSIFVENGGYDNKYSLLNVKRLITRMYQQNHLIISANDSNKNPFWGYNKNFYSQIISEGFAIVVEIPFFLQLSSSLEEAEIIKSYKNVRSIHSIFPFLEDKFTYLNYVSDIRIPYPIHLEILVQILRYWVKDVPFFHLLRLFLYDFCNWNCFIPSKKSISTFSKSNPRLFLFLYNFYVCEYESIFLFLRNKSSHLRLKSFSVFFERIFFYAKREHLVEVFSKDFSYTLPFFKDPNIHYVRYQGKCILASKNVPFLMNKWKHYFIYLWQCFFDVWSQPRTININQLSEHSFQLLGYFSNVRLNRSVVRSQMLQNTFLIEIVSKKLDIIVPIIPLIRSLAKAKFCNVLGHPISKPVWADSSDFDIIERFLRICRNLSHYYNGSSKKKSLYRIKYILRLSCIKTLACKHKSTVRAFLKRSGSEELLEEFFTEEEEILSLIFPRDSFTLHRFHRNRIWYLDIIFSNDLVNDE.

This sequence belongs to the intron maturase 2 family. MatK subfamily.

It localises to the plastid. The protein resides in the chloroplast. Functionally, usually encoded in the trnK tRNA gene intron. Probably assists in splicing its own and other chloroplast group II introns. The protein is Maturase K of Trifolium spumosum (Mediterranean clover).